A 673-amino-acid polypeptide reads, in one-letter code: MSRTLASAVPLSSPDYYERLGQLQHGLRDSEKKRLDLEKKLYEYNQSDTCRVKLKYVKLKNYLKEICESEKKAHTRNQEYLKRFERVQAHVVHFTTNTEKLQKLKLEYETQIKKMLCSKDSLGLKEELTDEDREKVAVHEGINSGTAMSRGLYQPATIFMGRQMSAILSMRDFSTEHKSPQPTKNFSIPDPHSHRQTAQSSNVTDSCVVQTSNDTQCLNKSDNIDGKASLQIGEKMPVTASVLSEEEQTHCLEIGSNTRHGKSNLSEGKKSAELNSPLRERLSPENRTTDLKCDSSSGSEGEILTREHIEVEEKRASPPVSPIPVSEYCESENKWSQEKHSPWEGVSDHLAHREPKSQKPFRKMQEEEEESWSTSSDLTISISEDDLILESPEPQPNPGGKMEGEDGIEALKLIHAEQERVALSTEKNCILQTLSSPDSEKESSTNAPTREPGQTPDSDVPRAQVGQHVATLKEHDNSVKEEATALLRKALTEECGRRSAIHSSESSCSLPSILNDNSGIKEAKPAVWLNSVPTREQEVSSGCGDKSKKENVAADIPITETEAYQLLKKATLQDNTNQTENRFQKTDASVSHLSGLNIGSGAFETKTANKIASEASFSSSEGSPLSRHENKKKPVINLKSNALWDESDDSNSEIEAALRPRNHNTDDSDDFYD.

Disordered stretches follow at residues 175-207 (TEHK…TDSC), 255-413 (GSNT…ALKL), 432-480 (QTLS…NSVK), 494-516 (ECGR…ILND), and 613-673 (SEAS…DFYD). Composition is skewed to polar residues over residues 196 to 207 (QTAQSSNVTDSC) and 255 to 266 (GSNTRHGKSNLS). 2 stretches are compositionally biased toward basic and acidic residues: residues 267–293 (EGKK…DLKC) and 303–316 (ILTR…EKRA). 2 positions are modified to phosphoserine: Ser-317 and Ser-321. Basic and acidic residues predominate over residues 331–357 (SENKWSQEKHSPWEGVSDHLAHREPKS). Position 379 is a phosphothreonine; by PLK1 (Thr-379). Over residues 471–480 (TLKEHDNSVK) the composition is skewed to basic and acidic residues. 2 stretches are compositionally biased toward low complexity: residues 503–512 (SSESSCSLPS) and 613–625 (SEAS…GSPL). A phosphoserine mark is found at Ser-647, Ser-650, and Ser-652.

The protein belongs to the kizuna family. As to quaternary structure, interacts with AKAP9, CEP72, ODF2, PCNT and TUBGCP2. Post-translationally, phosphorylation at Thr-379 by PLK1 is not needed for centrosomal localization or pericentriolar material expansion but is indispensable for spindle-pole stabilization.

The protein localises to the cytoplasm. The protein resides in the cytoskeleton. It localises to the microtubule organizing center. It is found in the centrosome. Its subcellular location is the cilium basal body. In terms of biological role, centrosomal protein required for establishing a robust mitotic centrosome architecture that can endure the forces that converge on the centrosomes during spindle formation. Required for stabilizing the expanded pericentriolar material around the centriole. The protein is Centrosomal protein kizuna (KIZ) of Homo sapiens (Human).